The chain runs to 344 residues: Peroxidase 36 (344 aa).

The first 28 residues, 1–28 (MNTKTVKSMAGIVLSQISLVALFPLCIC), serve as a signal peptide directing secretion. 4 disulfide bridges follow: C50–C130, C83–C88, C136–C337, and C215–C247. The active-site Proton acceptor is the H81. The Ca(2+) site is built by D82, V85, G87, D89, and S91. P178 provides a ligand contact to substrate. Heme b is bound at residue H208. T209 lines the Ca(2+) pocket. N-linked (GlcNAc...) asparagine glycosylation is present at N224. Residues D260, T263, and D268 each contribute to the Ca(2+) site.

The protein belongs to the peroxidase family. Classical plant (class III) peroxidase subfamily. Heme b is required as a cofactor. Requires Ca(2+) as cofactor.

It is found in the secreted. It catalyses the reaction 2 a phenolic donor + H2O2 = 2 a phenolic radical donor + 2 H2O. In terms of biological role, removal of H(2)O(2), oxidation of toxic reductants, biosynthesis and degradation of lignin, suberization, auxin catabolism, response to environmental stresses such as wounding, pathogen attack and oxidative stress. These functions might be dependent on each isozyme/isoform in each plant tissue. This Arabidopsis thaliana (Mouse-ear cress) protein is Peroxidase 36 (PER36).